The chain runs to 421 residues: UDP-N-acetylglucosamine 1-carboxyvinyltransferase (421 aa).

22-23 contributes to the phosphoenolpyruvate binding site; the sequence is KN. Arg-93 serves as a coordination point for UDP-N-acetyl-alpha-D-glucosamine. The active-site Proton donor is Cys-117. Cys-117 is modified (2-(S-cysteinyl)pyruvic acid O-phosphothioketal). Residues 122 to 126, Asp-308, and Ile-330 contribute to the UDP-N-acetyl-alpha-D-glucosamine site; that span reads RPVDL.

The protein belongs to the EPSP synthase family. MurA subfamily.

Its subcellular location is the cytoplasm. The catalysed reaction is phosphoenolpyruvate + UDP-N-acetyl-alpha-D-glucosamine = UDP-N-acetyl-3-O-(1-carboxyvinyl)-alpha-D-glucosamine + phosphate. It participates in cell wall biogenesis; peptidoglycan biosynthesis. Its function is as follows. Cell wall formation. Adds enolpyruvyl to UDP-N-acetylglucosamine. The sequence is that of UDP-N-acetylglucosamine 1-carboxyvinyltransferase from Pseudomonas fluorescens (strain Pf0-1).